Consider the following 80-residue polypeptide: MKSLILWSIKGYRRWISPLFPPSCRFQPTCSQYALEAVERFGVLRGSWLALKRLGRCHPFHPGGYDPVPHLCHHDLDNTP.

Belongs to the UPF0161 family.

It localises to the cell inner membrane. In terms of biological role, could be involved in insertion of integral membrane proteins into the membrane. The sequence is that of Putative membrane protein insertion efficiency factor from Picosynechococcus sp. (strain ATCC 27264 / PCC 7002 / PR-6) (Agmenellum quadruplicatum).